The primary structure comprises 353 residues: Uroporphyrinogen decarboxylase (353 aa).

Residues 29–33 (RQAGR), Asp78, Tyr154, Ser209, and His322 each bind substrate.

Belongs to the uroporphyrinogen decarboxylase family. As to quaternary structure, homodimer.

The protein localises to the cytoplasm. It carries out the reaction uroporphyrinogen III + 4 H(+) = coproporphyrinogen III + 4 CO2. It functions in the pathway porphyrin-containing compound metabolism; protoporphyrin-IX biosynthesis; coproporphyrinogen-III from 5-aminolevulinate: step 4/4. Functionally, catalyzes the decarboxylation of four acetate groups of uroporphyrinogen-III to yield coproporphyrinogen-III. This chain is Uroporphyrinogen decarboxylase, found in Bacillus velezensis (strain DSM 23117 / BGSC 10A6 / LMG 26770 / FZB42) (Bacillus amyloliquefaciens subsp. plantarum).